Reading from the N-terminus, the 333-residue chain is Heat shock transcription factor, X-linked member 3 (333 aa).

The disordered stretch occupies residues 1–66 (MASQNTEQEY…QDNSPPEDRN (66 aa)). Over residues 29 to 39 (GSSPDPNPDSS) the composition is skewed to low complexity. Residues 49 to 60 (AMSQDPGSQDNS) are compositionally biased toward polar residues. A DNA-binding region spans residues 79 to 182 (FRLSFPRKLW…PRLLENIQRK (104 aa)). The segment at 227–275 (QGAPSVQGPSGTQSFRRSGMWSKKSATRHPLGNGPPQEPNGPSWEGTSG) is disordered. Residues 228 to 242 (GAPSVQGPSGTQSFR) show a composition bias toward polar residues.

The protein belongs to the HSF family.

It is found in the nucleus. The polypeptide is Heat shock transcription factor, X-linked member 3 (Homo sapiens (Human)).